Consider the following 260-residue polypeptide: Ubiquinone/menaquinone biosynthesis C-methyltransferase UbiE (260 aa).

Residues threonine 83, aspartate 104, and 132 to 133 (NA) contribute to the S-adenosyl-L-methionine site.

It belongs to the class I-like SAM-binding methyltransferase superfamily. MenG/UbiE family.

The enzyme catalyses a 2-demethylmenaquinol + S-adenosyl-L-methionine = a menaquinol + S-adenosyl-L-homocysteine + H(+). It catalyses the reaction a 2-methoxy-6-(all-trans-polyprenyl)benzene-1,4-diol + S-adenosyl-L-methionine = a 5-methoxy-2-methyl-3-(all-trans-polyprenyl)benzene-1,4-diol + S-adenosyl-L-homocysteine + H(+). Its pathway is quinol/quinone metabolism; menaquinone biosynthesis; menaquinol from 1,4-dihydroxy-2-naphthoate: step 2/2. It participates in cofactor biosynthesis; ubiquinone biosynthesis. Methyltransferase required for the conversion of demethylmenaquinol (DMKH2) to menaquinol (MKH2) and the conversion of 2-polyprenyl-6-methoxy-1,4-benzoquinol (DDMQH2) to 2-polyprenyl-3-methyl-6-methoxy-1,4-benzoquinol (DMQH2). The sequence is that of Ubiquinone/menaquinone biosynthesis C-methyltransferase UbiE from Bartonella bacilliformis (strain ATCC 35685 / KC583 / Herrer 020/F12,63).